A 1356-amino-acid polypeptide reads, in one-letter code: DNA-directed RNA polymerase subunit beta (1356 aa).

The protein belongs to the RNA polymerase beta chain family. As to quaternary structure, the RNAP catalytic core consists of 2 alpha, 1 beta, 1 beta' and 1 omega subunit. When a sigma factor is associated with the core the holoenzyme is formed, which can initiate transcription.

The catalysed reaction is RNA(n) + a ribonucleoside 5'-triphosphate = RNA(n+1) + diphosphate. Functionally, DNA-dependent RNA polymerase catalyzes the transcription of DNA into RNA using the four ribonucleoside triphosphates as substrates. In Stutzerimonas stutzeri (strain A1501) (Pseudomonas stutzeri), this protein is DNA-directed RNA polymerase subunit beta.